The sequence spans 422 residues: MAEQLALVIGCIIGGLLLLIGISCCLWKRLCTTFTYEELPETADTATSSSFSKKEERPCRYAGIPSVRLPSVPFVVPPSHQGRDWVRLHGGDWAVAPQDPCPVPEHITCTSSPAAGQTSLPLCVMGSINPELYKSSEDVSEAGFPDGCLGRLWFSVEYQQESERLLVDLIKAQHLQVPAETCSTLVKLHLLPDKRRFLQSKAKRKTCNPQFDESFIFQVSSKSVAQRVLKFSVYHINKQRKHQLLGQVLFPLKNETLAGDRHRVIWRDLEAENLEPLSEFGDLQFCLSYNDYLSRLTVVVLRAKGLQLQEDRGVVSVFVKVSLMNHNKFVKCKRTSAVLGSVNPVYNETFSFKADANELDTASLSLVVLQITEGDKSYPLGRVVVGPYMYTRGKELEHWNEMLRKPKELVKRWHALCRPMEP.

Topologically, residues 1-4 are extracellular; that stretch reads MAEQ. The chain crosses the membrane as a helical; Signal-anchor for type III membrane protein span at residues 5–27; it reads LALVIGCIIGGLLLLIGISCCLW. The Cytoplasmic portion of the chain corresponds to 28–422; it reads KRLCTTFTYE…WHALCRPMEP (395 aa). 2 consecutive C2 domains span residues 148–267 and 279–400; these read CLGR…VIWR and EFGD…EHWN.

The protein belongs to the synaptotagmin family. Homodimer.

It is found in the membrane. May be involved in the trafficking and exocytosis of secretory vesicles in non-neuronal tissues. In Rattus norvegicus (Rat), this protein is Synaptotagmin-15 (Syt15).